The chain runs to 346 residues: Probable dolichyl-diphosphooligosaccharide--protein glycosyltransferase subunit 3B (346 aa).

The signal sequence occupies residues 1 to 22; the sequence is MALKSKLVSLLFLIATLSSTFA. At 23-189 the chain is on the lumenal side; sequence ASFSDSDSDS…KVGPIQRPPL (167 aa). N108 is a glycosylation site (N-linked (GlcNAc...) asparagine). Residues 190–210 form a helical membrane-spanning segment; the sequence is LSKPQIGIIVALIVIATPFII. Residues 211 to 225 are Cytoplasmic-facing; sequence KRVLKGETILHDTRL. The chain crosses the membrane as a helical span at residues 226–246; sequence WLSGAIFIYFFSVAGTMHNII. The Lumenal segment spans residues 247 to 277; that stretch reads RKMPMFLQDRNDPNKLVFFYQGSGMQLGAEG. A helical transmembrane segment spans residues 278 to 298; sequence FAVGFLYTVVGLLLAFVTNVL. Residues 299–308 lie on the Cytoplasmic side of the membrane; the sequence is VRVKNITAQR. Residues 309–329 form a helical membrane-spanning segment; it reads LIMLLALFISFWAVKKVVYLD. Over 330-346 the chain is Lumenal; sequence NWKTGYGIHPYWPSSWR.

This sequence belongs to the OST3/OST6 family. As to quaternary structure, component of the oligosaccharyltransferase (OST) complex.

It localises to the endoplasmic reticulum membrane. Subunit of the oligosaccharyl transferase (OST) complex that catalyzes the initial transfer of a defined glycan (Glc(3)Man(9)GlcNAc(2) in eukaryotes) from the lipid carrier dolichol-pyrophosphate to an asparagine residue within an Asn-X-Ser/Thr consensus motif in nascent polypeptide chains, the first step in protein N-glycosylation. N-glycosylation occurs cotranslationally and the complex associates with the Sec61 complex at the channel-forming translocon complex that mediates protein translocation across the endoplasmic reticulum (ER). All subunits are required for a maximal enzyme activity. The sequence is that of Probable dolichyl-diphosphooligosaccharide--protein glycosyltransferase subunit 3B (OST3B) from Arabidopsis thaliana (Mouse-ear cress).